The primary structure comprises 246 residues: U11/U12 small nuclear ribonucleoprotein 35 kDa protein (246 aa).

In terms of domain architecture, RRM spans 51 to 129 (LTLFVARLNL…HEIFVDYELE (79 aa)). Lysine 172 participates in a covalent cross-link: Glycyl lysine isopeptide (Lys-Gly) (interchain with G-Cter in SUMO2). The tract at residues 187-217 (SRSRERHWDSRTRDRDHDRGREKRWQEREPT) is disordered. Positions 192–217 (RHWDSRTRDRDHDRGREKRWQEREPT) are enriched in basic and acidic residues.

Component of the U11/U12 snRNPs that are part of the U12-type spliceosome. In terms of tissue distribution, expressed in heart, liver, skeletal muscle and pancreas.

It is found in the nucleus. This Homo sapiens (Human) protein is U11/U12 small nuclear ribonucleoprotein 35 kDa protein (SNRNP35).